Consider the following 688-residue polypeptide: G protein-coupled receptor kinase 3 (688 aa).

Positions 1–190 (MADLEAVLAD…ELNIHLSMND (190 aa)) are N-terminal. In terms of domain architecture, RGS spans 54–175 (TFDKIFNQKI…MESEKFTRFC (122 aa)). In terms of domain architecture, Protein kinase spans 191-453 (FSVHRIIGRG…ARELKEHIFF (263 aa)). ATP-binding positions include 197-205 (IGRGGFGEV) and K220. The active-site Proton acceptor is the D317. The 68-residue stretch at 454 to 521 (KGIDWQYVYL…MISERWQQEV (68 aa)) folds into the AGC-kinase C-terminal domain. The 95-residue stretch at 558–652 (DCIMHGYMLK…WLKELTCTFN (95 aa)) folds into the PH domain.

This sequence belongs to the protein kinase superfamily. AGC Ser/Thr protein kinase family. GPRK subfamily. Interacts with GIT1. In terms of processing, ubiquitinated. Expressed in brain cortex, hippocampus, striatum, hypothalamus, cerebellum and brainstem (at protein level).

It is found in the postsynapse. It localises to the presynapse. The enzyme catalyses [beta-adrenergic receptor] + ATP = [beta-adrenergic receptor]-phosphate + ADP + H(+). Its function is as follows. Specifically phosphorylates the agonist-occupied form of the beta-adrenergic and closely related receptors. In Rattus norvegicus (Rat), this protein is G protein-coupled receptor kinase 3.